The following is a 307-amino-acid chain: E3 ubiquitin-protein ligase PHF7 (307 aa).

The C2HC pre-PHD-type zinc finger occupies 30–68 (SPVCLLCLQEPGDPEKLGEFLQKDNLCVHYFCLILSSRL). Residues C33, C36, H58, and C61 each coordinate Zn(2+). Positions 67 to 92 (RLPQKGQPNRGLHGFMPEDIKREAVR) are required for interaction and ubiquitination of the nucleosome core particle. The segment at 96 to 145 (KICFVCKKKGAAIRCQNDQCVQNFHLPCGQERGCLSQFFGEYKSYCRKHR) adopts a PHD-type zinc-finger fold. Residues C98, C101, C110, C115, H120, C123, C141, H144, C160, C163, C179, C180, H186, C189, C204, C207, C248, C253, C273, C276, H282, C285, C297, and C300 each coordinate Zn(2+). Residues 150-307 (IHQGSLGEES…NECLPASTTS (158 aa)) form a required for interaction with ubiquitinated UBE2D2 region. The RING-type; degenerate zinc finger occupies 160–208 (CVLCCENLSRTSVENIQSPCCSQAIYHRKCIQKYAHTSAKHFFKCPQCN). Positions 244 to 301 (RYRHCDAPICLYEQGRDSFEDEGRWRLILCATCGSHGTHRDCSSLRPNSKKWECNECL) are required for association with and ubiquitination of H3.

In terms of assembly, interacts with MEF2C; the interaction promotes MEF2C binding to its transcription targets. Interacts with GATA4; the interaction promotes GATA4 binding to its transcription targets. Interacts with UBE2D2; the interaction inhibits cleavage of PHF7 and promotes association of the complex with the nucleosome core particle. As to expression, expressed in Leydig cells and in developing spermatids (at protein level). Highly expressed in Sertoli cells in testis.

The protein localises to the nucleus. The catalysed reaction is S-ubiquitinyl-[E2 ubiquitin-conjugating enzyme]-L-cysteine + [acceptor protein]-L-lysine = [E2 ubiquitin-conjugating enzyme]-L-cysteine + N(6)-ubiquitinyl-[acceptor protein]-L-lysine.. It participates in protein modification; protein ubiquitination. E3 ubiquitin-protein ligase which ubiquitinates histone H3 at 'Lys-14'. Required for male fertility, via inhibition of SPOP-mediated BRDT degradation when in the presence of acetylated histone H4 in early condensing spermatids. Stabilization of BRDT allows it to facilitate histone removal in early condensing spermatids and promote the progression of histone-to-protamine exchange. Promotes the expression of steroidogenesis proteins in the testes, and as a result plays a role in maintaining testosterone levels and repressing osteoclastogenesis. Promotes transcription of cardiac enhancer genes by facilitating binding of cardiac transcription factors such as MEF2C and GATA4 to target gene promoters. Ubiquitinates histone H4. Ubiquitinates histone H2A and H3 as part of the nucleosome core particle. The sequence is that of E3 ubiquitin-protein ligase PHF7 from Mus musculus (Mouse).